A 208-amino-acid chain; its full sequence is Nascent polypeptide-associated complex subunit alpha (208 aa).

A compositionally biased stretch (basic and acidic residues) spans 1-19 (MSSSRIEELPDDDVPKTTV). Disordered regions lie at residues 1 to 50 (MSSS…HSRN) and 120 to 166 (QLAA…VFDA). Acidic residues predominate over residues 21–34 (DAADSSESEVEGAE). The NAC-A/B domain maps to 48–113 (SRNEKKARKA…AKIEDLNSQA (66 aa)). Residues 120 to 131 (QLAAAEAAGSNE) show a composition bias toward low complexity. The segment covering 132 to 154 (HAGHDHASHDHGKGKAVESADKK) has biased composition (basic and acidic residues). The span at 155 to 164 (DEEEDDEEVF) shows a compositional bias: acidic residues. A UBA domain is found at 169–208 (LEAKDIELVMAQASVSRNKAIKALKENDNDIVNSIMALSV).

This sequence belongs to the NAC-alpha family. Part of the nascent polypeptide-associated complex (NAC), consisting of EGD2 and EGD1. NAC associates with ribosomes via EGD1.

Its subcellular location is the cytoplasm. It is found in the nucleus. Component of the nascent polypeptide-associated complex (NAC), a dynamic component of the ribosomal exit tunnel, protecting the emerging polypeptides from interaction with other cytoplasmic proteins to ensure appropriate nascent protein targeting. The NAC complex also promotes mitochondrial protein import by enhancing productive ribosome interactions with the outer mitochondrial membrane and blocks the inappropriate interaction of ribosomes translating non-secretory nascent polypeptides with translocation sites in the membrane of the endoplasmic reticulum. EGD2 may also be involved in transcription regulation. The protein is Nascent polypeptide-associated complex subunit alpha (EGD2) of Ajellomyces capsulatus (strain NAm1 / WU24) (Darling's disease fungus).